The primary structure comprises 215 residues: Putative glycosyltransferase ALG1L2 (215 aa).

Positions 40-66 are disordered; that stretch reads PFRARSEPEDPDTERSAFTERDSGSGL. The span at 43–62 shows a compositional bias: basic and acidic residues; that stretch reads ARSEPEDPDTERSAFTERDS.

It belongs to the glycosyltransferase group 1 family.

Its function is as follows. Putative glycosyltransferase. This chain is Putative glycosyltransferase ALG1L2 (ALG1L2), found in Homo sapiens (Human).